Here is a 375-residue protein sequence, read N- to C-terminus: Queuine tRNA-ribosyltransferase (375 aa).

Residue Asp-94 is the Proton acceptor of the active site. Substrate-binding positions include 94–98 (DSGGF), Asp-148, Gln-191, and Gly-218. An RNA binding region spans residues 249-255 (GVGTPED). Residue Asp-268 is the Nucleophile of the active site. The RNA binding; important for wobble base 34 recognition stretch occupies residues 273-277 (TRIAR). Zn(2+) contacts are provided by Cys-306, Cys-308, Cys-311, and His-337.

The protein belongs to the queuine tRNA-ribosyltransferase family. Homodimer. Within each dimer, one monomer is responsible for RNA recognition and catalysis, while the other monomer binds to the replacement base PreQ1. The cofactor is Zn(2+).

The enzyme catalyses 7-aminomethyl-7-carbaguanine + guanosine(34) in tRNA = 7-aminomethyl-7-carbaguanosine(34) in tRNA + guanine. The protein operates within tRNA modification; tRNA-queuosine biosynthesis. In terms of biological role, catalyzes the base-exchange of a guanine (G) residue with the queuine precursor 7-aminomethyl-7-deazaguanine (PreQ1) at position 34 (anticodon wobble position) in tRNAs with GU(N) anticodons (tRNA-Asp, -Asn, -His and -Tyr). Catalysis occurs through a double-displacement mechanism. The nucleophile active site attacks the C1' of nucleotide 34 to detach the guanine base from the RNA, forming a covalent enzyme-RNA intermediate. The proton acceptor active site deprotonates the incoming PreQ1, allowing a nucleophilic attack on the C1' of the ribose to form the product. After dissociation, two additional enzymatic reactions on the tRNA convert PreQ1 to queuine (Q), resulting in the hypermodified nucleoside queuosine (7-(((4,5-cis-dihydroxy-2-cyclopenten-1-yl)amino)methyl)-7-deazaguanosine). This Caldanaerobacter subterraneus subsp. tengcongensis (strain DSM 15242 / JCM 11007 / NBRC 100824 / MB4) (Thermoanaerobacter tengcongensis) protein is Queuine tRNA-ribosyltransferase.